A 364-amino-acid chain; its full sequence is Histidinol-phosphate aminotransferase (364 aa).

Residue K220 is modified to N6-(pyridoxal phosphate)lysine.

This sequence belongs to the class-II pyridoxal-phosphate-dependent aminotransferase family. Histidinol-phosphate aminotransferase subfamily. In terms of assembly, homodimer. Pyridoxal 5'-phosphate is required as a cofactor.

The catalysed reaction is L-histidinol phosphate + 2-oxoglutarate = 3-(imidazol-4-yl)-2-oxopropyl phosphate + L-glutamate. It participates in amino-acid biosynthesis; L-histidine biosynthesis; L-histidine from 5-phospho-alpha-D-ribose 1-diphosphate: step 7/9. The protein is Histidinol-phosphate aminotransferase of Stenotrophomonas maltophilia (strain R551-3).